A 331-amino-acid chain; its full sequence is Porphobilinogen deaminase (331 aa).

S-(dipyrrolylmethanemethyl)cysteine is present on Cys-248. Residues 307–331 (QLLQAPKQTGEPHDPDRHDKGTGRP) are disordered. The span at 316-331 (GEPHDPDRHDKGTGRP) shows a compositional bias: basic and acidic residues.

This sequence belongs to the HMBS family. Monomer. Dipyrromethane serves as cofactor.

It catalyses the reaction 4 porphobilinogen + H2O = hydroxymethylbilane + 4 NH4(+). It functions in the pathway porphyrin-containing compound metabolism; protoporphyrin-IX biosynthesis; coproporphyrinogen-III from 5-aminolevulinate: step 2/4. Tetrapolymerization of the monopyrrole PBG into the hydroxymethylbilane pre-uroporphyrinogen in several discrete steps. The sequence is that of Porphobilinogen deaminase from Acidothermus cellulolyticus (strain ATCC 43068 / DSM 8971 / 11B).